We begin with the raw amino-acid sequence, 539 residues long: Cytochrome c oxidase subunit 1 homolog, bacteroid (539 aa).

The next 3 helical transmembrane spans lie at 4–24, 28–48, and 75–95; these read TVEM…AGLA, LFGA…LVLM, and GVVA…VVAL. His117 is a binding site for heme b. Helical transmembrane passes span 118 to 138, 154 to 174, 187 to 207, 214 to 234, 265 to 285, 298 to 318, 330 to 350, and 368 to 388; these read TSAV…FYVV, FVFW…LLGI, VDLW…GTIM, IYVA…LHVV, GHNA…YYFI, LSII…PHHL, LGMV…INGL, and MMVM…MMSI. The Cu cation site is built by His266, His316, and His317. Positions 404 and 406 each coordinate heme b. 4 helical membrane-spanning segments follow: residues 405–425, 443–463, 475–495, and 499–519; these read VHSG…YYLV, HFWL…VAGI, QGFL…YYVM, and GGAL…MTIL.

Belongs to the heme-copper respiratory oxidase family. Cu(2+) is required as a cofactor. Heme b serves as cofactor.

Its subcellular location is the cell membrane. It catalyses the reaction 4 Fe(II)-[cytochrome c] + O2 + 8 H(+)(in) = 4 Fe(III)-[cytochrome c] + 2 H2O + 4 H(+)(out). It functions in the pathway energy metabolism; oxidative phosphorylation. In terms of biological role, cytochrome c oxidase is the component of the respiratory chain that catalyzes the reduction of oxygen to water. Subunits 1-3 form the functional core of the enzyme complex. Co I is the catalytic subunit of the enzyme. Electrons originating in cytochrome c or a quinol are transferred to the bimetallic center formed by a high-spin heme and copper B. The polypeptide is Cytochrome c oxidase subunit 1 homolog, bacteroid (fixN) (Rhizobium meliloti (strain 1021) (Ensifer meliloti)).